The chain runs to 522 residues: Polyprenol-phosphate-mannose--protein mannosyltransferase (522 aa).

Over 1-42 the chain is Cytoplasmic; sequence MTARPPESCVLAKDRPEEPVVPVVSPGPLVPVADFGPLDRLR. A helical membrane pass occupies residues 43–63; sequence GWIVTGLITLLATVTRFLNLG. The Extracellular portion of the chain corresponds to 64-119; sequence SLTDAGTPIFDEKHYAPQAWQVLNNHGVEDNPGYGLVVHPPVGKQLIAIGEAIFGY. A helical transmembrane segment spans residues 120-140; that stretch reads NGFGWRFTGALLGVVLVALVV. Over 141–149 the chain is Cytoplasmic; sequence RIVRRISRS. Residues 150–170 traverse the membrane as a helical segment; the sequence is TLVGAIAGVLLICDGVSFVTA. Position 171 (Arg-171) is a topological domain, extracellular. A helical membrane pass occupies residues 172–192; that stretch reads TALLDGFLTFFVVAAFGALIV. Residues 193–239 are Cytoplasmic-facing; that stretch reads DRDQVRERMHIALLAGRSAATVWGPRVGVRWWRFGAGVLLGLACATK. Residues 240–260 form a helical membrane-spanning segment; the sequence is WSGVYFVLFFGAMALAFDVAA. Residues 261–281 are Extracellular-facing; it reads RRQYQVQRPWLGTVRRDVLPS. The chain crosses the membrane as a helical span at residues 282–302; the sequence is GYALGLIPFAVYLATYAPWFA. Over 303-390 the chain is Cytoplasmic; the sequence is SETAIDRHAV…CGAQSCVKAE (88 aa). A helical membrane pass occupies residues 391–411; sequence MLVGTPAMWWLAVPVLAYAGW. Residues 412 to 418 are Extracellular-facing; the sequence is RMFVRRD. Residues 419–439 traverse the membrane as a helical segment; it reads WRYAVVLVGYCAGWLPWFADI. Residues 440 to 442 lie on the Cytoplasmic side of the membrane; the sequence is DRQ. The helical transmembrane segment at 443–463 threads the bilayer; that stretch reads MYFFYAATMAPFLVMGISLVL. The Extracellular segment spans residues 464 to 478; the sequence is GDILYHPGQGSERRT. The chain crosses the membrane as a helical span at residues 479 to 499; that stretch reads LGLIVVCCYVALVVTNFAWLY. At 500 to 522 the chain is on the cytoplasmic side; that stretch reads PVLTGLPISQQTWNLEIWLPSWR.

The protein belongs to the glycosyltransferase 39 family.

Its subcellular location is the cell membrane. It functions in the pathway protein modification; protein glycosylation. In terms of biological role, protein O-mannosyltransferase that catalyzes the transfer of a single mannose residue from a polyprenol phospho-mannosyl lipidic donor to the hydroxyl group of selected serine and threonine residues in acceptor proteins. The protein is Polyprenol-phosphate-mannose--protein mannosyltransferase (pmt) of Mycobacterium tuberculosis (strain CDC 1551 / Oshkosh).